The following is a 457-amino-acid chain: Vasoactive intestinal polypeptide receptor 1 (457 aa).

Residues 1–30 form the signal peptide; that stretch reads MRPPSPLPARWLCVLAGALAWALGPAGGQA. At 31-141 the chain is on the extracellular side; sequence ARLQEECDYV…DEQQTMFYGS (111 aa). Disulfide bonds link Cys-37–Cys-208, Cys-50–Cys-72, Cys-63–Cys-105, Cys-86–Cys-122, and Cys-215–Cys-285. Asn-58, Asn-69, and Asn-100 each carry an N-linked (GlcNAc...) asparagine glycan. Residues 142–166 form a helical membrane-spanning segment; the sequence is VKTGYTIGYGLSLATLLVATAILSL. At 167-174 the chain is on the cytoplasmic side; the sequence is FRKLHCTR. A helical membrane pass occupies residues 175-196; the sequence is NYIHMHLFISFILRAAAVFIKD. Residues 197-216 lie on the Extracellular side of the membrane; the sequence is LALFDSGESDQCSEGSVGCK. A helical transmembrane segment spans residues 217-241; the sequence is AAMVFFQYCVMANFFWLLVEGLYLY. The Cytoplasmic segment spans residues 242 to 254; the sequence is TLLAVSFFSERKY. The helical transmembrane segment at 255–276 threads the bilayer; that stretch reads FWGYILIGWGVPSTFTMVWTIA. Residues 277–291 are Extracellular-facing; the sequence is RIHFEDYGCWDTINS. Asn-290 is a glycosylation site (N-linked (GlcNAc...) asparagine). The chain crosses the membrane as a helical span at residues 292–316; sequence SLWWIIKGPILTSILVNFILFICII. The Cytoplasmic portion of the chain corresponds to 317–338; that stretch reads RILLQKLRPPDIRKSDSSPYSR. Residues 339–359 form a helical membrane-spanning segment; that stretch reads LARSTLLLIPLFGVHYIMFAF. Residues 360–367 are Extracellular-facing; that stretch reads FPDNFKPE. The chain crosses the membrane as a helical span at residues 368–391; sequence VKMVFELVVGSFQGFVVAILYCFL. Over 392–457 the chain is Cytoplasmic; the sequence is NGEVQAELRR…SSFQAEVSLV (66 aa).

The protein belongs to the G-protein coupled receptor 2 family. Interacts with ADCYAP1/PACAP; activated by both PACAP27 and PACAP38 neuropeptides. Interacts with VIP; the interaction results in VIPR1 activation. In terms of tissue distribution, in lung, HT-29 colonic epithelial cells, Raji B-lymphoblasts. Lesser extent in brain, heart, kidney, liver and placenta. Not expressed in CD4+ or CD8+ T-cells. Expressed in the T-cell lines HARRIS, HuT 78, Jurkat and SUP-T1, but not in the T-cell lines Peer, MOLT-4, HSB and YT.

The protein resides in the cell membrane. Functionally, g protein-coupled receptor activated by the neuropeptides vasoactive intestinal peptide (VIP) and pituitary adenylate cyclase-activating polypeptide (ADCYAP1/PACAP). Binds VIP and both PACAP27 and PACAP38 bioactive peptides with the following order of ligand affinity VIP = PACAP27 &gt; PACAP38. Ligand binding causes a conformation change that triggers signaling via guanine nucleotide-binding proteins (G proteins) and modulates the activity of downstream effectors. Activates cAMP-dependent pathway. This is Vasoactive intestinal polypeptide receptor 1 from Homo sapiens (Human).